The primary structure comprises 147 residues: Small ribosomal subunit protein uS12 (147 aa).

This sequence belongs to the universal ribosomal protein uS12 family. Part of the 30S ribosomal subunit.

Its function is as follows. With S4 and S5 plays an important role in translational accuracy. Located at the interface of the 30S and 50S subunits. This Methanococcus maripaludis (strain C5 / ATCC BAA-1333) protein is Small ribosomal subunit protein uS12.